Reading from the N-terminus, the 278-residue chain is Alcohol dehydrogenase-related 31 kDa protein (278 aa).

11–34 (YVADCGGIALETSKVLMTKNIAKL) provides a ligand contact to NAD(+). Ser139 serves as a coordination point for substrate. Catalysis depends on Tyr152, which acts as the Proton acceptor.

It belongs to the short-chain dehydrogenases/reductases (SDR) family.

This is Alcohol dehydrogenase-related 31 kDa protein (Adhr) from Drosophila persimilis (Fruit fly).